Reading from the N-terminus, the 369-residue chain is DNA replication and repair protein RecF (369 aa).

Residue 30 to 37 (GRNAQGKT) participates in ATP binding.

Belongs to the RecF family.

The protein localises to the cytoplasm. The RecF protein is involved in DNA metabolism; it is required for DNA replication and normal SOS inducibility. RecF binds preferentially to single-stranded, linear DNA. It also seems to bind ATP. In Streptococcus agalactiae serotype Ia (strain ATCC 27591 / A909 / CDC SS700), this protein is DNA replication and repair protein RecF.